Consider the following 100-residue polypeptide: Large ribosomal subunit protein uL23 (100 aa).

The protein belongs to the universal ribosomal protein uL23 family. Part of the 50S ribosomal subunit. Contacts protein L29, and trigger factor when it is bound to the ribosome.

Functionally, one of the early assembly proteins it binds 23S rRNA. One of the proteins that surrounds the polypeptide exit tunnel on the outside of the ribosome. Forms the main docking site for trigger factor binding to the ribosome. The sequence is that of Large ribosomal subunit protein uL23 from Parasynechococcus marenigrum (strain WH8102).